The chain runs to 134 residues: Small ribosomal subunit protein uS11 (134 aa).

The interval 114 to 134 (DVTPVPSDSTRRKGGRRGRRL) is disordered. A compositionally biased stretch (basic residues) spans 125–134 (RKGGRRGRRL).

The protein belongs to the universal ribosomal protein uS11 family.

The sequence is that of Small ribosomal subunit protein uS11 (RPS14) from Candida albicans (Yeast).